We begin with the raw amino-acid sequence, 209 residues long: Orotate phosphoribosyltransferase (209 aa).

5-phospho-alpha-D-ribose 1-diphosphate-binding positions include arginine 96, lysine 100, histidine 102, and 122-130 (EDLISTGKS). Serine 126 is a binding site for orotate.

Belongs to the purine/pyrimidine phosphoribosyltransferase family. PyrE subfamily. In terms of assembly, homodimer. It depends on Mg(2+) as a cofactor.

The enzyme catalyses orotidine 5'-phosphate + diphosphate = orotate + 5-phospho-alpha-D-ribose 1-diphosphate. It functions in the pathway pyrimidine metabolism; UMP biosynthesis via de novo pathway; UMP from orotate: step 1/2. Its function is as follows. Catalyzes the transfer of a ribosyl phosphate group from 5-phosphoribose 1-diphosphate to orotate, leading to the formation of orotidine monophosphate (OMP). This Coxiella burnetii (strain RSA 493 / Nine Mile phase I) protein is Orotate phosphoribosyltransferase.